Consider the following 289-residue polypeptide: Early E4 34 kDa protein (289 aa).

The protein belongs to the adenoviridae E4 30 to 34 kDa protein family. As to quaternary structure, interacts with E1B-55k.

The protein resides in the host nucleus. It is found in the host cytoplasm. Functionally, plays a major role to prevent cellular inhibition of viral genome replication by nuclear bodies. Assembles an SCF-like E3 ubiquitin ligase complex based on the cellular proteins ELOB, ELOC, CUL5 and RBX1, in cooperation with viral E1B-55K. This viral RING-type ligase ubiquitinates cellular substrates prior to proteasomal degradation: p53/TP53, LIG4, MRE11-RAD50-NBS1 (MRN) complex, ITGA3, DAXX and BLM. The protein is Early E4 34 kDa protein of Human adenovirus F serotype 40 (HAdV-40).